Here is a 259-residue protein sequence, read N- to C-terminus: Virulence plasmid ParA family protein pGP5-D (259 aa).

9–16 (FKGGTGKT) lines the ATP pocket.

The protein belongs to the ParA family.

This Chlamydia psittaci (Chlamydophila psittaci) protein is Virulence plasmid ParA family protein pGP5-D.